Reading from the N-terminus, the 87-residue chain is Homeotic protein ultrabithorax (87 aa).

Residues 22–27 (FYPWMA) carry the Antp-type hexapeptide motif.

This sequence belongs to the Antp homeobox family. In terms of tissue distribution, in the embryo, expression is seen in the epidermis, somatic and visceral mesoderm, and the peripheral and central nervous system.

It localises to the nucleus. In terms of biological role, sequence-specific transcription factor which is part of a developmental regulatory system that provides cells with specific positional identities on the anterior-posterior axis. Binds the consensus region 5'-TTAAT[GT][GA]-3'. This homeotic protein controls development of the cells in the posterior thoracic and first abdominal segments. It activates the synthesis of the decapentaplegic (DPP) growth factor. This Drosophila virilis (Fruit fly) protein is Homeotic protein ultrabithorax (Ubx).